We begin with the raw amino-acid sequence, 350 residues long: MPVLHNRISNDELKAKMLAESEPRTTISFYKYFTIASPQQTRDALYQVFTALDVFGRVYLAYEGINAQISVPQSKVETFRQQLYTFDPALDGLRLNIALEDDGKSFWVLRMKVRDRIVADGIDDPSFDASNVGDYLKAADVNEMLDDPDAVFIDMRNHYEYEVGHFENALEIPADTFREQLPKAVEMLREHADKKIVMYCTGGIRCEKASAWMKHNGFNKVWHIEGGIIEYARRARAQGLPVRFIGKNFVFDERMGERISDEVIAHCHQCGAPCDSHTNCKNDGCHLLFIQCPQCASKFNGCCSEQCCEELALPEEEQRRRRAGRENGNKIFNKSRGRLNSKLSIPDPAE.

The region spanning 146-240 (DDPDAVFIDM…YARRARAQGL (95 aa)) is the Rhodanese domain. Cys200 functions as the Cysteine persulfide intermediate in the catalytic mechanism. The span at 319–328 (RRRRAGRENG) shows a compositional bias: basic and acidic residues. Positions 319–350 (RRRRAGRENGNKIFNKSRGRLNSKLSIPDPAE) are disordered.

This sequence belongs to the TrhO family.

It catalyses the reaction uridine(34) in tRNA + AH2 + O2 = 5-hydroxyuridine(34) in tRNA + A + H2O. In terms of biological role, catalyzes oxygen-dependent 5-hydroxyuridine (ho5U) modification at position 34 in tRNAs. This Salmonella newport (strain SL254) protein is tRNA uridine(34) hydroxylase.